The primary structure comprises 628 residues: DNA primase (628 aa).

The segment at 40 to 64 (CPFHEERSPSFSVAEDKQIFHCFGC) adopts a CHC2-type zinc-finger fold. The region spanning 269 to 351 (NTVLLFEGFM…DLSIVSIPEK (83 aa)) is the Toprim domain. The Mg(2+) site is built by Glu275, Asp319, and Asp321.

It belongs to the DnaG primase family. Monomer. Interacts with DnaB. The cofactor is Zn(2+). Mg(2+) serves as cofactor.

The catalysed reaction is ssDNA + n NTP = ssDNA/pppN(pN)n-1 hybrid + (n-1) diphosphate.. In terms of biological role, RNA polymerase that catalyzes the synthesis of short RNA molecules used as primers for DNA polymerase during DNA replication. In Enterococcus faecalis (strain ATCC 700802 / V583), this protein is DNA primase.